A 341-amino-acid chain; its full sequence is Heme A synthase (341 aa).

The next 8 helical transmembrane spans lie at 7-27, 92-112, 118-138, 159-179, 190-210, 253-273, 280-300, and 302-322; these read VTVWLGVCCSMTLLMVVIGGI, LFGRALGAVFCLPIPYFAITK, MVAKLLIVALLGGMQGAMGWF, LFLTILLFSILWHSFLRCAGV, FFTAAAVVGLTVLQMVLGALV, FLHRLVAVLIVVCAAPLPFWL, LFLACVALQFLLGVATLVSVV, and IFLAAMHQVFGFVTLAAGVHM. Residue His255 participates in heme binding. His308 lines the heme pocket.

This sequence belongs to the COX15/CtaA family. Type 2 subfamily. As to quaternary structure, interacts with CtaB. Heme b serves as cofactor.

It localises to the cell membrane. It carries out the reaction Fe(II)-heme o + 2 A + H2O = Fe(II)-heme a + 2 AH2. It participates in porphyrin-containing compound metabolism; heme A biosynthesis; heme A from heme O: step 1/1. In terms of biological role, catalyzes the conversion of heme O to heme A by two successive hydroxylations of the methyl group at C8. The first hydroxylation forms heme I, the second hydroxylation results in an unstable dihydroxymethyl group, which spontaneously dehydrates, resulting in the formyl group of heme A. The sequence is that of Heme A synthase from Anaplasma marginale (strain St. Maries).